The following is a 295-amino-acid chain: UDP-N-acetylenolpyruvoylglucosamine reductase (295 aa).

The 165-residue stretch at 25–189 folds into the FAD-binding PCMH-type domain; it reads RVGGPADLFA…LEALFRLDQR (165 aa). Arg-169 is an active-site residue. Catalysis depends on Ser-218, which acts as the Proton donor. Glu-288 is a catalytic residue.

Belongs to the MurB family. The cofactor is FAD.

It localises to the cytoplasm. The catalysed reaction is UDP-N-acetyl-alpha-D-muramate + NADP(+) = UDP-N-acetyl-3-O-(1-carboxyvinyl)-alpha-D-glucosamine + NADPH + H(+). The protein operates within cell wall biogenesis; peptidoglycan biosynthesis. Its function is as follows. Cell wall formation. This is UDP-N-acetylenolpyruvoylglucosamine reductase from Pelobacter propionicus (strain DSM 2379 / NBRC 103807 / OttBd1).